The primary structure comprises 680 residues: DNA-directed RNA polymerase subunit beta' (680 aa).

Residues Cys-69, Cys-71, Cys-87, and Cys-90 each contribute to the Zn(2+) site. Mg(2+)-binding residues include Asp-489, Asp-491, and Asp-493.

Belongs to the RNA polymerase beta' chain family. RpoC1 subfamily. As to quaternary structure, in plastids the minimal PEP RNA polymerase catalytic core is composed of four subunits: alpha, beta, beta', and beta''. When a (nuclear-encoded) sigma factor is associated with the core the holoenzyme is formed, which can initiate transcription. Mg(2+) is required as a cofactor. The cofactor is Zn(2+).

Its subcellular location is the plastid. It is found in the chloroplast. The catalysed reaction is RNA(n) + a ribonucleoside 5'-triphosphate = RNA(n+1) + diphosphate. Its function is as follows. DNA-dependent RNA polymerase catalyzes the transcription of DNA into RNA using the four ribonucleoside triphosphates as substrates. This is DNA-directed RNA polymerase subunit beta' from Ranunculus macranthus (Large buttercup).